Here is a 144-residue protein sequence, read N- to C-terminus: Transcriptional regulator MraZ (144 aa).

SpoVT-AbrB domains are found at residues T5–E47 and T77–A120.

This sequence belongs to the MraZ family. In terms of assembly, forms oligomers.

The protein resides in the cytoplasm. It is found in the nucleoid. The protein is Transcriptional regulator MraZ of Mycolicibacterium gilvum (strain PYR-GCK) (Mycobacterium gilvum (strain PYR-GCK)).